The sequence spans 387 residues: Major outer membrane protein P.IA (387 aa).

A signal peptide spans 1–19 (MRKKLTALVLSALPLAAVA).

Belongs to the Gram-negative porin family. In terms of assembly, homotrimer.

It localises to the cell outer membrane. Functionally, serves as a slightly cation selective porin. Major antigen on the gonococcal cell surface and it may have pathogenic properties in addition to its porin activity. The protein is Major outer membrane protein P.IA (porA) of Neisseria meningitidis serogroup C.